A 263-amino-acid polypeptide reads, in one-letter code: MDIIPPRLKEPAYRIYEMRLRHELVRSKAQLPRHIAVLCDGNRRWARDAGYDDVSIGYRKGAAKIAEMLRWCQAAGIEMATIYLLSTENLQRDPDELTALIEIITDVVEEICAPYNKWSVRTVGDLELLGDEPARRLREAVESTTTKGANFHVNVAVAYGGRQEIVDAVRSLLSKELANGATAEQLIEAVTVDGISENLYTSGQPDPDLVIRTSGEQRLSGFLLWQSAYSEMWFTEAYWPAFRRVDFLRALRDYTARHRRFGK.

Asp-40 is an active-site residue. Asp-40 contributes to the Mg(2+) binding site. Substrate is bound by residues 41–44, Trp-45, and 86–88; these read GNRR and STE. Asn-89 (proton acceptor) is an active-site residue. Substrate is bound by residues Arg-92, Arg-212, and 218–220; that span reads RLS. A Mg(2+)-binding site is contributed by Glu-231.

It belongs to the UPP synthase family. Z-FPP synthase subfamily. As to quaternary structure, homodimer. Mg(2+) is required as a cofactor.

The protein localises to the cell membrane. It carries out the reaction isopentenyl diphosphate + (2E)-geranyl diphosphate = (2Z,6E)-farnesyl diphosphate + diphosphate. Catalyzes the condensation of only one isopentenyl pyrophosphate (IPP) unit in the cis configuration to E-geranyl diphosphate (E-GPP) generating the 15 carbon product (2Z,6E)-farnesyl diphosphate (Z-FPP or EZ-FPP). Z-FPP is the precursor of decaprenyl diphosphate, which has a central role in the biosynthesis of the mycobacterial cell wall. The protein is (2Z,6E)-farnesyl diphosphate synthase (uppS) of Mycolicibacterium smegmatis (strain ATCC 700084 / mc(2)155) (Mycobacterium smegmatis).